A 93-amino-acid chain; its full sequence is SH3 domain-binding glutamic acid-rich-like protein 3 (93 aa).

At S2 the chain carries N-acetylserine. S2 is a glycosylation site (O-linked (GalNAc...) serine). Residues 2–93 (SGRRVYSTSV…NTLQEFLKLA (92 aa)) enclose the Glutaredoxin domain. 2 O-linked (GalNAc...) threonine glycosylation sites follow: T9 and T12.

This sequence belongs to the SH3BGR family. In terms of assembly, homodimer. Interacts with MYO1C (via its IQ motifs); the interaction is dependent on calcium and takes place at membrane ruffles. Post-translationally, may be glycosylated.

Its subcellular location is the cytoplasm. The protein localises to the cytosol. It localises to the cell projection. The protein resides in the ruffle membrane. It is found in the nucleus. Could act as a modulator of glutaredoxin biological activity. May play a role in cytoskeleton organization. The sequence is that of SH3 domain-binding glutamic acid-rich-like protein 3 (SH3BGRL3) from Pongo abelii (Sumatran orangutan).